A 303-amino-acid polypeptide reads, in one-letter code: Pyridoxal 5'-phosphate synthase subunit PdxS (303 aa).

Aspartate 33 is a binding site for D-ribose 5-phosphate. The Schiff-base intermediate with D-ribose 5-phosphate role is filled by lysine 90. Glycine 162 contributes to the D-ribose 5-phosphate binding site. Arginine 174 contributes to the D-glyceraldehyde 3-phosphate binding site. Residues glycine 223 and 244-245 (GS) each bind D-ribose 5-phosphate.

Belongs to the PdxS/SNZ family. In terms of assembly, in the presence of PdxT, forms a dodecamer of heterodimers.

The catalysed reaction is aldehydo-D-ribose 5-phosphate + D-glyceraldehyde 3-phosphate + L-glutamine = pyridoxal 5'-phosphate + L-glutamate + phosphate + 3 H2O + H(+). Its pathway is cofactor biosynthesis; pyridoxal 5'-phosphate biosynthesis. Catalyzes the formation of pyridoxal 5'-phosphate from ribose 5-phosphate (RBP), glyceraldehyde 3-phosphate (G3P) and ammonia. The ammonia is provided by the PdxT subunit. Can also use ribulose 5-phosphate and dihydroxyacetone phosphate as substrates, resulting from enzyme-catalyzed isomerization of RBP and G3P, respectively. In Mycolicibacterium smegmatis (strain ATCC 700084 / mc(2)155) (Mycobacterium smegmatis), this protein is Pyridoxal 5'-phosphate synthase subunit PdxS.